Consider the following 364-residue polypeptide: MSEMGFLRSVAAVLLLAVFSHAAVVTENGLPIQWGKAPSDLSHLPISDTGVQVNPWDYSQRMTMYKMLINATNAYMSSMGPGEQENPLWSLPLQLGWKLKSGRLADPTLDSSSTCGSEASDPVCISPLSWFACVNYYLSVLPFLAAVETGVVSSGGHQVLIQVPAEVAQDYCSSYSDCSTKHPNAMAKWHLFFQSLRQVSQSEDSDFNKKDSILGLMWAAEEESLQTASGACTERQKLYSSPEVSFQQSWLNSAAFVSAAHFHANIERSEKFMAPLPSRVLQEADSPPNIADLSTEENHTLYIFGWMNSVNQLLGGSLVNLWRKAMCSAQAREKGQALLHDLILDPKFPGSSLWSILSEMSTSC.

The signal sequence occupies residues 1–22; it reads MSEMGFLRSVAAVLLLAVFSHA. N70 carries an N-linked (GlcNAc...) asparagine glycan.

The protein belongs to the LEG1 family. Detected in all tissues tested, with the highest levels in serum (at protein level). At mRNA level, only expressed in liver.

It is found in the secreted. Its function is as follows. Important for early development of liver, exocrine pancreas and intestine, probably through cell cycle regulation. In liver, its function is partially redundant with leg1b function. This chain is Protein leg1a, found in Danio rerio (Zebrafish).